Here is a 1162-residue protein sequence, read N- to C-terminus: Spike glycoprotein (1162 aa).

The first 18 residues, methionine 1–alanine 18, serve as a signal peptide directing secretion. Over valine 19–tyrosine 1095 the chain is Extracellular. N-linked (GlcNAc...) asparagine; by host glycosylation is found at asparagine 51, asparagine 77, asparagine 103, asparagine 144, asparagine 163, asparagine 178, asparagine 212, asparagine 237, asparagine 247, asparagine 264, asparagine 276, asparagine 306, asparagine 425, asparagine 447, asparagine 513, asparagine 530, asparagine 579, asparagine 591, asparagine 669, asparagine 676, and asparagine 714. Residues isoleucine 769–leucine 874 form a heptad repeat 1 (HR1) region. The stretch at glutamine 822–valine 866 forms a coiled coil. N-linked (GlcNAc...) asparagine; by host glycosylation is found at asparagine 947, asparagine 960, asparagine 979, asparagine 1014, asparagine 1038, asparagine 1051, and asparagine 1074. Residues asparagine 1024–isoleucine 1105 are heptad repeat 2 (HR2). The stretch at proline 1055–leucine 1083 forms a coiled coil. The helical transmembrane segment at valine 1096 to phenylalanine 1116 threads the bilayer. Residues methionine 1117–valine 1162 are Cytoplasmic-facing. The short motif at lysine 1159–valine 1162 is the Di-lysine motif element.

Belongs to the gammacoronaviruses spike protein family. In terms of assembly, homotrimer; each monomer consists of a S1 and a S2 subunit. The resulting peplomers protrude from the virus surface as spikes. Post-translationally, specific enzymatic cleavages in vivo yield mature proteins. The precursor is processed into S1 and S2 by host cell furin or furin-like protease to yield the mature S1 and S2 proteins. The cleavage site between S1 and S2 requires the optimal sequence [KR]-X-[KR]-R. Additionally, a second cleavage leads to the release of a fusion peptide after viral attachment to host cell receptor.

The protein resides in the virion membrane. Its subcellular location is the host endoplasmic reticulum-Golgi intermediate compartment membrane. Its function is as follows. Attaches the virion to the host cell membrane by interacting with sialic acids, initiating the infection. Mediates fusion of the virion and cellular membranes by acting as a class I viral fusion protein. Under the current model, the protein has at least 3 conformational states: pre-fusion native state, pre-hairpin intermediate state, and post-fusion hairpin state. During viral and target cell membrane fusion, the coiled coil regions (heptad repeats) assume a trimer-of-hairpins structure, positioning the fusion peptide in close proximity to the C-terminal region of the ectodomain. The formation of this structure appears to drive apposition and subsequent fusion of viral and target cell membranes. In terms of biological role, acts as a viral fusion peptide after S2 cleavage occurring upon virus endocytosis. This is Spike glycoprotein from Avian infectious bronchitis virus (strain Beaudette) (IBV).